The primary structure comprises 322 residues: Large ribosomal subunit protein uL29m (322 aa).

Residues 1-44 (MLNVQRGLHTTVRLSARTKYTKPKPKPQARVIKSEPSQVTHHDN) form a disordered region.

The protein belongs to the universal ribosomal protein uL29 family. Component of the mitochondrial large ribosomal subunit. Mature mitochondrial ribosomes consist of a small (37S) and a large (54S) subunit. The 37S subunit contains at least 33 different proteins and 1 molecule of RNA (15S). The 54S subunit contains at least 45 different proteins and 1 molecule of RNA (21S).

The protein localises to the mitochondrion. This is Large ribosomal subunit protein uL29m (MRPL4) from Vanderwaltozyma polyspora (strain ATCC 22028 / DSM 70294 / BCRC 21397 / CBS 2163 / NBRC 10782 / NRRL Y-8283 / UCD 57-17) (Kluyveromyces polysporus).